The chain runs to 108 residues: Nucleoid-associated protein Mpe_A2533 (108 aa).

Positions 86–108 (TSEEKMGKLTAGMPLPPGMKLPF) are disordered. A compositionally biased stretch (pro residues) spans 99 to 108 (PLPPGMKLPF).

The protein belongs to the YbaB/EbfC family. In terms of assembly, homodimer.

It localises to the cytoplasm. Its subcellular location is the nucleoid. Its function is as follows. Binds to DNA and alters its conformation. May be involved in regulation of gene expression, nucleoid organization and DNA protection. In Methylibium petroleiphilum (strain ATCC BAA-1232 / LMG 22953 / PM1), this protein is Nucleoid-associated protein Mpe_A2533.